A 96-amino-acid chain; its full sequence is Integration host factor subunit beta (96 aa).

Belongs to the bacterial histone-like protein family. Heterodimer of an alpha and a beta chain.

In terms of biological role, this protein is one of the two subunits of integration host factor, a specific DNA-binding protein that functions in genetic recombination as well as in transcriptional and translational control. In Methylocella silvestris (strain DSM 15510 / CIP 108128 / LMG 27833 / NCIMB 13906 / BL2), this protein is Integration host factor subunit beta.